A 201-amino-acid chain; its full sequence is Protease (201 aa).

Residues His53, Asp70, and Cys121 contribute to the active site.

It belongs to the peptidase C5 family. Interacts with protease cofactor pVI-C; this interaction is necessary for protease activation.

Its subcellular location is the virion. The protein resides in the host nucleus. The catalysed reaction is Cleaves proteins of the adenovirus and its host cell at two consensus sites: -Yaa-Xaa-Gly-Gly-|-Xaa- and -Yaa-Xaa-Gly-Xaa-|-Gly- (in which Yaa is Met, Ile or Leu, and Xaa is any amino acid).. Requires DNA and protease cofactor for maximal activation. Inside nascent virions, becomes partially activated by binding to the viral DNA, allowing it to cleave the cofactor that binds to the protease and fully activates it. Actin, like the viral protease cofactor, seems to act as a cofactor in the cleavage of cytokeratin 18 and of actin itself. Its function is as follows. Cleaves viral precursor proteins (pTP, pIIIa, pVI, pVII, pVIII, and pX) inside newly assembled particles giving rise to mature virions. Protease complexed to its cofactor slides along the viral DNA to specifically locate and cleave the viral precursors. Mature virions have a weakened organization compared to the unmature virions, thereby facilitating subsequent uncoating. Without maturation, the particle lacks infectivity and is unable to uncoat. Late in adenovirus infection, in the cytoplasm, may participate in the cytoskeleton destruction. Cleaves host cell cytoskeletal keratins K7 and K18. In Equine adenovirus B serotype 2 (EAdV-2), this protein is Protease.